Consider the following 210-residue polypeptide: Thymidylate kinase (210 aa).

Residue 13 to 20 (GLEGAGKS) participates in ATP binding.

The protein belongs to the thymidylate kinase family.

It carries out the reaction dTMP + ATP = dTDP + ADP. In terms of biological role, phosphorylation of dTMP to form dTDP in both de novo and salvage pathways of dTTP synthesis. The sequence is that of Thymidylate kinase from Shewanella loihica (strain ATCC BAA-1088 / PV-4).